The chain runs to 1052 residues: Lateral signaling target protein 2 homolog (1052 aa).

Disordered regions lie at residues 311-348 (YSSI…TSPH), 379-455 (PSML…DSDS), 506-539 (DEFG…STSA), 551-678 (LRLP…ASSF), and 814-973 (NTID…IPDG). Composition is skewed to low complexity over residues 312–346 (SSIE…STTS), 379–392 (PSML…TPTA), and 400–419 (PSHS…NPPA). A compositionally biased stretch (acidic residues) spans 422-455 (SEDDDDDDEEREDDEEECGMLDSDEQDLNDDSDS). The segment covering 554–574 (PSSSSENEQTTGSNQQSTIKT) has biased composition (polar residues). Phosphoserine is present on residues S555 and S556. 2 stretches are compositionally biased toward basic residues: residues 588–614 (RQRH…HHQQ) and 625–644 (SHHH…ARKR). A compositionally biased stretch (polar residues) spans 652-661 (STTAEQQQTI). Residues 824 to 842 (NNNNNNNNNSGSSSSSNSS) show a composition bias toward low complexity. Position 854 is a phosphoserine (S854). The segment covering 872–915 (QQQQQQQAQLQLQMQRQRNNSVGSNSPSSSSSSSSSSEHNSPIS) has biased composition (low complexity). Residues 926–935 (SNSASMPSIG) show a composition bias toward polar residues. Residues 936 to 963 (STATTAAATAAATATTTTSATTTTTTTT) are compositionally biased toward low complexity. An FYVE-type zinc finger spans residues 972 to 1032 (DGKAPRCMSC…VCRECYVREV (61 aa)). Zn(2+) is bound by residues C978, C981, C994, C997, C1002, C1005, C1024, and C1027.

The protein belongs to the lst-2 family.

Its function is as follows. Negative regulator of epidermal growth factor receptor (EGFR) signaling. The chain is Lateral signaling target protein 2 homolog from Drosophila virilis (Fruit fly).